A 1120-amino-acid polypeptide reads, in one-letter code: Topless-related protein 1 (1120 aa).

The region spanning 4–36 (LSRELVFLILQFLDEEKFKETVHKLEQESGFFF) is the LisH domain. One can recognise a CTLH domain in the interval 34–92 (FFFNMKYFEDEVHNGNWDEVEKYLSGFTKVDDNRYSMKIFFEIRKQKYLEALDRHDRPK). Disordered stretches follow at residues 210–235 (ARAP…PLGA) and 283–307 (HPRT…SKRT). At S214 the chain carries Phosphoserine. WD repeat units lie at residues 353–393 (SQGS…RLVQ), 415–454 (EPVV…DMRQ), 460–501 (AHVG…KRYT), 504–545 (GHEA…SRVD), 548–591 (APGR…VKRT), 595–634 (FHKR…LLTA), 639–678 (GGLQ…RLLH), 699–745 (ERPA…EPSQ), 755–794 (MRVT…RNAT), 822–860 (NPEE…TMAT), 863–903 (PPPP…VKSK), 906–945 (GHSK…KQKS), 999–1038 (ESAA…LRCR), and 1052–1091 (SNVH…GKWG). The disordered stretch occupies residues 1087-1120 (EGKWGVAPPPENGSASAVTATPSVGASASDQPQR). Over residues 1099–1120 (GSASAVTATPSVGASASDQPQR) the composition is skewed to polar residues.

As to quaternary structure, tetramer. Interacts with SNC1 (via TIR domain) and HDA19. Interacts with SPL (via EAR motif). Interacts with SPEAR3/TIE1. Binds to and corepresses GAF1/IDD2. Highly expressed in stamen primordium, microsporocyte, ovule primordium and megasporocyte during sporogenesis.

It is found in the nucleus. Functionally, transcriptional corepressor. Activates TIR-NB-LRR R protein-mediated immune responses through repression of negative regulators such as CNGC2/DND1. Negative regulator of jasmonate responses. The polypeptide is Topless-related protein 1 (TPR1) (Arabidopsis thaliana (Mouse-ear cress)).